Consider the following 130-residue polypeptide: Small ribosomal subunit protein uS8 (130 aa).

The protein belongs to the universal ribosomal protein uS8 family. In terms of assembly, part of the 30S ribosomal subunit. Contacts proteins S5 and S12.

In terms of biological role, one of the primary rRNA binding proteins, it binds directly to 16S rRNA central domain where it helps coordinate assembly of the platform of the 30S subunit. The polypeptide is Small ribosomal subunit protein uS8 (Aliivibrio fischeri (strain ATCC 700601 / ES114) (Vibrio fischeri)).